Reading from the N-terminus, the 440-residue chain is Trigger factor (440 aa).

The PPIase FKBP-type domain occupies 163–248 (GDILTVDFLG…AKALKRRVAP (86 aa)).

This sequence belongs to the FKBP-type PPIase family. Tig subfamily.

The protein resides in the cytoplasm. It catalyses the reaction [protein]-peptidylproline (omega=180) = [protein]-peptidylproline (omega=0). Its function is as follows. Involved in protein export. Acts as a chaperone by maintaining the newly synthesized protein in an open conformation. Functions as a peptidyl-prolyl cis-trans isomerase. The protein is Trigger factor of Acidiphilium cryptum (strain JF-5).